The sequence spans 211 residues: ATP phosphoribosyltransferase (211 aa).

This sequence belongs to the ATP phosphoribosyltransferase family. Short subfamily. In terms of assembly, heteromultimer composed of HisG and HisZ subunits.

It is found in the cytoplasm. The enzyme catalyses 1-(5-phospho-beta-D-ribosyl)-ATP + diphosphate = 5-phospho-alpha-D-ribose 1-diphosphate + ATP. It participates in amino-acid biosynthesis; L-histidine biosynthesis; L-histidine from 5-phospho-alpha-D-ribose 1-diphosphate: step 1/9. Functionally, catalyzes the condensation of ATP and 5-phosphoribose 1-diphosphate to form N'-(5'-phosphoribosyl)-ATP (PR-ATP). Has a crucial role in the pathway because the rate of histidine biosynthesis seems to be controlled primarily by regulation of HisG enzymatic activity. The polypeptide is ATP phosphoribosyltransferase (Lacticaseibacillus paracasei (strain ATCC 334 / BCRC 17002 / CCUG 31169 / CIP 107868 / KCTC 3260 / NRRL B-441) (Lactobacillus paracasei)).